The chain runs to 120 residues: Movement protein TGB2 (120 aa).

Topologically, residues 1–8 are cytoplasmic; the sequence is MPFAQPPD. A helical transmembrane segment spans residues 9 to 29; sequence YSKSVFPIAVGIAVAVVLFTL. Residues 30 to 71 lie on the Lumenal side of the membrane; it reads TRSTLPQVGDNIHNLPHGGNYQDGTKRISYCGPRDSFPSSSL. The helical transmembrane segment at 72–92 threads the bilayer; it reads ISSGTPMIIGIIIFLIFAIYV. Residues 93–120 are Cytoplasmic-facing; it reads SEKWSRSGSRRCSCCVPGAPACTATVHE.

This sequence belongs to the Tymovirales TGBp2 protein family.

It is found in the host endoplasmic reticulum membrane. Functionally, plays a role in viral cell-to-cell propagation, by facilitating genome transport to neighboring plant cells through plasmosdesmata,. The sequence is that of Movement protein TGB2 from Crataegus (hawthorn).